A 239-amino-acid polypeptide reads, in one-letter code: ATP-dependent dethiobiotin synthetase BioD (239 aa).

15–20 (EIGKTF) contacts ATP. Threonine 19 lines the Mg(2+) pocket. Lysine 40 is an active-site residue. Residues aspartate 57, 118-121 (EGVG), and 178-179 (NH) each bind ATP. The Mg(2+) site is built by aspartate 57 and glutamate 118.

It belongs to the dethiobiotin synthetase family. In terms of assembly, homodimer. Mg(2+) serves as cofactor.

The protein localises to the cytoplasm. It catalyses the reaction (7R,8S)-7,8-diammoniononanoate + CO2 + ATP = (4R,5S)-dethiobiotin + ADP + phosphate + 3 H(+). Its pathway is cofactor biosynthesis; biotin biosynthesis; biotin from 7,8-diaminononanoate: step 1/2. Catalyzes a mechanistically unusual reaction, the ATP-dependent insertion of CO2 between the N7 and N8 nitrogen atoms of 7,8-diaminopelargonic acid (DAPA, also called 7,8-diammoniononanoate) to form a ureido ring. This is ATP-dependent dethiobiotin synthetase BioD from Burkholderia cenocepacia (strain HI2424).